The following is a 551-amino-acid chain: Nucleobase-ascorbate transporter 3 (551 aa).

The disordered stretch occupies residues 1–30; that stretch reads MVETGHHHQHPPAPAAAGHPPVPSMAMARN. 12 helical membrane passes run 56–76, 92–111, 117–136, 158–178, 179–199, 202–222, 242–262, 306–326, 390–410, 412–432, 442–462, and 481–501; these read ETVV…VLIA, RVIQ…QTLI, TVMG…IRDY, SLII…WGNL, IRIF…LGLF, GFPL…LLII, ALLV…VSGA, VFGM…VFFA, FFMI…SIPL, IFAG…ISFI, NMYV…YFLA, and DILN…ATIL.

It belongs to the nucleobase:cation symporter-2 (NCS2) (TC 2.A.40) family. As to expression, expressed in the apical meristem 4 days after imbibition (DAI). Expressed in the major veins of rosette leaves and pedicels. Expressed in the root central cylinder, root meristems, root tips and lateral root primordia.

It is found in the membrane. This Arabidopsis thaliana (Mouse-ear cress) protein is Nucleobase-ascorbate transporter 3 (NAT3).